A 285-amino-acid chain; its full sequence is (3S)-malyl-CoA thioesterase (285 aa).

Positions 70 and 122 each coordinate substrate. Glu-122 and Asp-148 together coordinate Mg(2+).

This sequence belongs to the HpcH/HpaI aldolase family. In terms of assembly, homodimer or homotrimer. Mg(2+) is required as a cofactor.

The catalysed reaction is (S)-malyl-CoA + H2O = (S)-malate + CoA + H(+). Its function is as follows. Catalyzes the hydrolysis of (3S)-malyl-CoA to (3S)-malate and free CoA. Inactive towards beta-methylmalyl-CoA and other CoA esters. This Cereibacter sphaeroides (strain ATCC 17025 / ATH 2.4.3) (Rhodobacter sphaeroides) protein is (3S)-malyl-CoA thioesterase.